The following is a 397-amino-acid chain: Protein Rep52 (397 aa).

The 156-residue stretch at D84–K239 folds into the SF3 helicase domain. Position 110 to 117 (G110 to T117) interacts with ATP. Residues G265–A296 form a disordered region.

Homooligomer. Interacts with host PRKX.

Its subcellular location is the host nucleus. Its function is as follows. Plays a critical role during packaging of viral DNA into empty capsids, where they are thought to be part of the packaging motor complex. The single stranded genomic DNA is packaged in a 3' to 5' direction and requires the association between viral DNA and Rep40. Regulates host PKA activity by interacting with host PRKX as a mechanism to interfere with helper virus propagation and to promote its own replication. The chain is Protein Rep52 (Rep52) from Mammalia (AAV-2).